A 566-amino-acid polypeptide reads, in one-letter code: MKQSMVFSPTLREVPADAEIKSHQLLLRAGFMRQNASGIYSFLPFGLKVLHKVERIVREEMERAGAVELLMPAMQAAELWQESGRWYSYGSELMRMKDRNAREFALGATHEEVITDLVRDEVKSYKKLPLTLYQIQTKFRDEQRPRFGLLRGREFLMKDAYSFHATQESLDEVYDRLYKAYSNIFARCGLNFRAVIADSGAMGGKDTHEFMVLSDVGEDTIAYSDTSDYAANIEMAPVVATYTKSDEAEKALEKVATPDQKAIEEVSAFLNIEAEKCIKSMVFKVDEKLVVVLVRGDHEVNDVKVKNVYGASVVELASHEEVKELLNCEVGSLGPIGVTGDIEIIADHAVASIVNGCSGANEEGFHYVNVNPERDFKVSQYTDLRFIQEGDQSPDGNGTILFARGIEVGHVFKLGTRYSEAMNATFLDENGKTQPLIMGCYGIGVSRTVAAIAEQFNDENGLVWPKAVAPFHVHVIPVNMKSDAQREMGENIYNSLQEQGYEVLLDDRAERAGVKFADADLFGLPVRVTVGKKADEGIVEVKVRATGESEEVKVEELQTYIANILK.

Belongs to the class-II aminoacyl-tRNA synthetase family. ProS type 1 subfamily. As to quaternary structure, homodimer.

It is found in the cytoplasm. The catalysed reaction is tRNA(Pro) + L-proline + ATP = L-prolyl-tRNA(Pro) + AMP + diphosphate. Catalyzes the attachment of proline to tRNA(Pro) in a two-step reaction: proline is first activated by ATP to form Pro-AMP and then transferred to the acceptor end of tRNA(Pro). As ProRS can inadvertently accommodate and process non-cognate amino acids such as alanine and cysteine, to avoid such errors it has two additional distinct editing activities against alanine. One activity is designated as 'pretransfer' editing and involves the tRNA(Pro)-independent hydrolysis of activated Ala-AMP. The other activity is designated 'posttransfer' editing and involves deacylation of mischarged Ala-tRNA(Pro). The misacylated Cys-tRNA(Pro) is not edited by ProRS. This is Proline--tRNA ligase from Bacillus cereus (strain AH187).